Reading from the N-terminus, the 118-residue chain is Acidic phospholipase A2 homolog (118 aa).

7 cysteine pairs are disulfide-bonded: Cys-11–Cys-70, Cys-25–Cys-117, Cys-27–Cys-43, Cys-42–Cys-98, Cys-49–Cys-91, Cys-59–Cys-84, and Cys-77–Cys-89.

It belongs to the phospholipase A2 family. Group I subfamily. A49 sub-subfamily. As to expression, expressed by the venom gland.

Its subcellular location is the secreted. Its function is as follows. Snake venom phospholipase A2 (PLA2) homolog that lacks both catalytic and neurotoxicity activities. This is Acidic phospholipase A2 homolog from Bungarus fasciatus (Banded krait).